Reading from the N-terminus, the 255-residue chain is Carboxy-S-adenosyl-L-methionine synthase (255 aa).

S-adenosyl-L-methionine-binding positions include tyrosine 45, 70-72, 124-125, and asparagine 139; these read GCS and DI.

Belongs to the class I-like SAM-binding methyltransferase superfamily. Cx-SAM synthase family. As to quaternary structure, homodimer.

The catalysed reaction is prephenate + S-adenosyl-L-methionine = carboxy-S-adenosyl-L-methionine + 3-phenylpyruvate + H2O. Catalyzes the conversion of S-adenosyl-L-methionine (SAM) to carboxy-S-adenosyl-L-methionine (Cx-SAM). The chain is Carboxy-S-adenosyl-L-methionine synthase from Hamiltonella defensa subsp. Acyrthosiphon pisum (strain 5AT).